Here is a 212-residue protein sequence, read N- to C-terminus: Ras-related protein RABC1 (212 aa).

G2 carries the N-acetylglycine modification. GTP is bound at residue 20–27 (GDSGVGKS). An Effector region motif is present at residues 41–49 (LSPTIGVDF). Residues 67 to 71 (DTAGQ), 127 to 130 (NKVD), and 157 to 158 (SA) contribute to the GTP site. The segment at 182-212 (TAEGSSGGKKNIFKQNPAQTTSTSSSYCCSS) is disordered. A compositionally biased stretch (low complexity) spans 201–212 (TTSTSSSYCCSS). S-geranylgeranyl cysteine attachment occurs at residues C209 and C210.

Belongs to the small GTPase superfamily. Rab family.

It localises to the cell membrane. Intracellular vesicle trafficking and protein transport. The chain is Ras-related protein RABC1 (RABC1) from Arabidopsis thaliana (Mouse-ear cress).